We begin with the raw amino-acid sequence, 123 residues long: Large ribosomal subunit protein bL12 (123 aa).

It belongs to the bacterial ribosomal protein bL12 family. As to quaternary structure, homodimer. Part of the ribosomal stalk of the 50S ribosomal subunit. Forms a multimeric L10(L12)X complex, where L10 forms an elongated spine to which 2 to 4 L12 dimers bind in a sequential fashion. Binds GTP-bound translation factors.

Forms part of the ribosomal stalk which helps the ribosome interact with GTP-bound translation factors. Is thus essential for accurate translation. This is Large ribosomal subunit protein bL12 from Pseudoalteromonas atlantica (strain T6c / ATCC BAA-1087).